We begin with the raw amino-acid sequence, 277 residues long: Formamidopyrimidine-DNA glycosylase (277 aa).

P2 acts as the Schiff-base intermediate with DNA in catalysis. E3 acts as the Proton donor in catalysis. The Proton donor; for beta-elimination activity role is filled by K58. DNA is bound by residues H97, R116, and R158. An FPG-type zinc finger spans residues N243–R277. R267 functions as the Proton donor; for delta-elimination activity in the catalytic mechanism.

It belongs to the FPG family. In terms of assembly, monomer. Zn(2+) serves as cofactor.

The enzyme catalyses Hydrolysis of DNA containing ring-opened 7-methylguanine residues, releasing 2,6-diamino-4-hydroxy-5-(N-methyl)formamidopyrimidine.. It carries out the reaction 2'-deoxyribonucleotide-(2'-deoxyribose 5'-phosphate)-2'-deoxyribonucleotide-DNA = a 3'-end 2'-deoxyribonucleotide-(2,3-dehydro-2,3-deoxyribose 5'-phosphate)-DNA + a 5'-end 5'-phospho-2'-deoxyribonucleoside-DNA + H(+). Involved in base excision repair of DNA damaged by oxidation or by mutagenic agents. Acts as a DNA glycosylase that recognizes and removes damaged bases. Has a preference for oxidized purines, such as 7,8-dihydro-8-oxoguanine (8-oxoG). Has AP (apurinic/apyrimidinic) lyase activity and introduces nicks in the DNA strand. Cleaves the DNA backbone by beta-delta elimination to generate a single-strand break at the site of the removed base with both 3'- and 5'-phosphates. This chain is Formamidopyrimidine-DNA glycosylase, found in Alkalilimnicola ehrlichii (strain ATCC BAA-1101 / DSM 17681 / MLHE-1).